The sequence spans 598 residues: Proline--tRNA ligase (598 aa).

This sequence belongs to the class-II aminoacyl-tRNA synthetase family. ProS type 1 subfamily. As to quaternary structure, homodimer.

Its subcellular location is the cytoplasm. The enzyme catalyses tRNA(Pro) + L-proline + ATP = L-prolyl-tRNA(Pro) + AMP + diphosphate. Functionally, catalyzes the attachment of proline to tRNA(Pro) in a two-step reaction: proline is first activated by ATP to form Pro-AMP and then transferred to the acceptor end of tRNA(Pro). As ProRS can inadvertently accommodate and process non-cognate amino acids such as alanine and cysteine, to avoid such errors it has two additional distinct editing activities against alanine. One activity is designated as 'pretransfer' editing and involves the tRNA(Pro)-independent hydrolysis of activated Ala-AMP. The other activity is designated 'posttransfer' editing and involves deacylation of mischarged Ala-tRNA(Pro). The misacylated Cys-tRNA(Pro) is not edited by ProRS. This Synechococcus sp. (strain CC9311) protein is Proline--tRNA ligase.